Consider the following 402-residue polypeptide: S-adenosylmethionine synthase (402 aa).

Glycine 137–aspartate 142 contacts ATP.

Belongs to the AdoMet synthase 2 family. Mg(2+) serves as cofactor.

It carries out the reaction L-methionine + ATP + H2O = S-adenosyl-L-methionine + phosphate + diphosphate. The protein operates within amino-acid biosynthesis; S-adenosyl-L-methionine biosynthesis; S-adenosyl-L-methionine from L-methionine: step 1/1. Catalyzes the formation of S-adenosylmethionine from methionine and ATP. This Pyrobaculum calidifontis (strain DSM 21063 / JCM 11548 / VA1) protein is S-adenosylmethionine synthase.